The following is a 299-amino-acid chain: GTPase Era (299 aa).

The region spanning 4–171 (KSGFVAILGR…VDILSENLDE (168 aa)) is the Era-type G domain. The interval 12–19 (GRPNVGKS) is G1. Position 12 to 19 (12 to 19 (GRPNVGKS)) interacts with GTP. A G2 region spans residues 38 to 42 (QTTRN). A G3 region spans residues 59-62 (DTPG). Residues 59 to 63 (DTPGI) and 121 to 124 (NKID) each bind GTP. The tract at residues 121–124 (NKID) is G4. The interval 150–152 (ISA) is G5. Residues 202–280 (TREEIPHSVA…FLETWVKVKK (79 aa)) form the KH type-2 domain.

This sequence belongs to the TRAFAC class TrmE-Era-EngA-EngB-Septin-like GTPase superfamily. Era GTPase family. In terms of assembly, monomer.

Its subcellular location is the cytoplasm. The protein localises to the cell membrane. Its function is as follows. An essential GTPase that binds both GDP and GTP, with rapid nucleotide exchange. Plays a role in 16S rRNA processing and 30S ribosomal subunit biogenesis and possibly also in cell cycle regulation and energy metabolism. The sequence is that of GTPase Era from Streptococcus pneumoniae (strain Hungary19A-6).